A 350-amino-acid chain; its full sequence is Protein CONSERVED ONLY IN THE GREEN LINEAGE 160, chloroplastic (350 aa).

The N-terminal 46 residues, 1–46, are a transit peptide targeting the chloroplast; it reads MAILSYISATSTTPPIPQDQSPNSRLPTKIILPNKKPEKWSTGVAP. Positions 7-26 are enriched in polar residues; sequence ISATSTTPPIPQDQSPNSRL. Residues 7-58 form a disordered region; the sequence is ISATSTTPPIPQDQSPNSRLPTKIILPNKKPEKWSTGVAPGEYGGPPTTTKL. Residue Ser117 is modified to Phosphoserine. Helical transmembrane passes span 213 to 233, 239 to 259, 276 to 296, and 304 to 324; these read KNKI…SAYI, IALS…MLGN, ANQP…RWNA, and FMHL…IATF.

Its subcellular location is the plastid. The protein localises to the chloroplast thylakoid membrane. In terms of biological role, facilitates the assembly of the membrane proton channel of the chloroplastic F-type ATPase. Specifically required for the efficient assembly and integration of the CF(0) subunit c into the chloroplastic ATPase complex in the thylakoid membrane. The chain is Protein CONSERVED ONLY IN THE GREEN LINEAGE 160, chloroplastic from Arabidopsis thaliana (Mouse-ear cress).